Here is a 347-residue protein sequence, read N- to C-terminus: sn-glycerol-3-phosphate import ATP-binding protein UgpC 1 (347 aa).

An ABC transporter domain is found at 4-234 (IELIDLKKNY…PETVFVAGFI (231 aa)). An ATP-binding site is contributed by 36-43 (GPSGCGKS).

This sequence belongs to the ABC transporter superfamily. sn-glycerol-3-phosphate importer (TC 3.A.1.1.3) family. As to quaternary structure, the complex is composed of two ATP-binding proteins (UgpC), two transmembrane proteins (UgpA and UgpE) and a solute-binding protein (UgpB).

The protein resides in the cell inner membrane. The enzyme catalyses sn-glycerol 3-phosphate(out) + ATP + H2O = sn-glycerol 3-phosphate(in) + ADP + phosphate + H(+). Its function is as follows. Part of the ABC transporter complex UgpBAEC involved in sn-glycerol-3-phosphate (G3P) import. Responsible for energy coupling to the transport system. This chain is sn-glycerol-3-phosphate import ATP-binding protein UgpC 1, found in Rhizobium etli (strain ATCC 51251 / DSM 11541 / JCM 21823 / NBRC 15573 / CFN 42).